We begin with the raw amino-acid sequence, 283 residues long: Bifunctional protein FolD (283 aa).

NADP(+) contacts are provided by residues 166–168 (GQS), serine 191, and isoleucine 232.

It belongs to the tetrahydrofolate dehydrogenase/cyclohydrolase family. Homodimer.

The catalysed reaction is (6R)-5,10-methylene-5,6,7,8-tetrahydrofolate + NADP(+) = (6R)-5,10-methenyltetrahydrofolate + NADPH. It carries out the reaction (6R)-5,10-methenyltetrahydrofolate + H2O = (6R)-10-formyltetrahydrofolate + H(+). Its pathway is one-carbon metabolism; tetrahydrofolate interconversion. Its function is as follows. Catalyzes the oxidation of 5,10-methylenetetrahydrofolate to 5,10-methenyltetrahydrofolate and then the hydrolysis of 5,10-methenyltetrahydrofolate to 10-formyltetrahydrofolate. The protein is Bifunctional protein FolD of Laribacter hongkongensis (strain HLHK9).